We begin with the raw amino-acid sequence, 270 residues long: MDPRQACLDCLAQEPPALFEAALWIAAEHLPAYSPAHALRELDELVRQIGASLDDRASASERAQGLLRRMSEQGFCEDDDFPLQPRSALLPLVLQRRQGQPLSLALVAMELARRLDIPLVGVNFPGRFLLRVPQADHLLDPATGRRLYTPDCRELLLRLQGPKSELQAAYLKQASPGEILQRLSRNLRQLHSAAGEPLAALKDAQRVIELGPVGAADHEARAGLYRQLDCPQAERYDLERALLLSDDPTEQLRLGQRLGELAPPTSRALH.

It belongs to the UPF0162 family.

In Pseudomonas aeruginosa (strain ATCC 15692 / DSM 22644 / CIP 104116 / JCM 14847 / LMG 12228 / 1C / PRS 101 / PAO1), this protein is UPF0162 protein PA3419.